Here is an 87-residue protein sequence, read N- to C-terminus: Virulence protein PagD (87 aa).

The first 20 residues, 1 to 20 (MKHHAFMLWSLLIFSFHVLA), serve as a signal peptide directing secretion. The segment at 46–87 (QPPTNTDKKQARQISSPSCPTTKPMMSAPVNDARKGNTFSRT) is disordered. Residues 57–66 (RQISSPSCPT) are compositionally biased toward polar residues.

Its function is as follows. Putative function in virulence. Could be involved in promoting S.typhimurium survival within macrophages. In Salmonella typhimurium (strain LT2 / SGSC1412 / ATCC 700720), this protein is Virulence protein PagD (pagD).